Reading from the N-terminus, the 158-residue chain is Endoribonuclease YbeY (158 aa).

Zn(2+)-binding residues include His-124, His-128, and His-134.

It belongs to the endoribonuclease YbeY family. The cofactor is Zn(2+).

It is found in the cytoplasm. In terms of biological role, single strand-specific metallo-endoribonuclease involved in late-stage 70S ribosome quality control and in maturation of the 3' terminus of the 16S rRNA. The protein is Endoribonuclease YbeY of Caldicellulosiruptor saccharolyticus (strain ATCC 43494 / DSM 8903 / Tp8T 6331).